We begin with the raw amino-acid sequence, 360 residues long: Hydroxyproline O-arabinosyltransferase RDN2 (360 aa).

The helical; Signal-anchor transmembrane segment at 13-33 (VLGSSFATYNLVTMIIHYGSA) threads the bilayer.

The protein localises to the golgi apparatus membrane. The enzyme catalyses trans-4-hydroxy-L-prolyl-[protein] + UDP-beta-L-arabinofuranose = O-(beta-L-arabinofuranosyl)-trans-4-hydroxy-L-prolyl-[protein] + UDP + H(+). Functionally, glycosyltransferase involved in the O-arabinosylation of several proteins including extensins and small signaling peptides. Catalyzes the transfer of the initial L-arabinose to the hydroxyl group of Hyp residues. Probably involved in the arabinosylation of CLAVATA3/ESR-related (CLE) signaling peptides that move from root to shoot, to interact with SUNN receptor kinase signaling that regulates nodulation. Involved in long distance nodulation signaling events. Involved in the autoregulation of nodulation (AON), a long distance systemic signaling from root to shoot and back again, which allows legumes to limit the number of root nodules formed based on available nitrogen and previous rhizobial colonization. Functions in the root, upstream of the shoot receptor kinase SUNN and via CLE peptide, to control AON. The chain is Hydroxyproline O-arabinosyltransferase RDN2 from Medicago truncatula (Barrel medic).